The sequence spans 96 residues: UPF0251 protein VPA0321 (96 aa).

This sequence belongs to the UPF0251 family.

The protein is UPF0251 protein VPA0321 of Vibrio parahaemolyticus serotype O3:K6 (strain RIMD 2210633).